The following is a 166-amino-acid chain: Outer membrane protein assembly factor BamE (166 aa).

Residues 1-18 form the signal peptide; that stretch reads MKRTVFPLAVAAALTLTA. A lipid anchor (N-palmitoyl cysteine) is attached at cysteine 19. The S-diacylglycerol cysteine moiety is linked to residue cysteine 19. Positions 143-166 are disordered; the sequence is LFSNDDSGEMPVKPESKPSDLLNE.

This sequence belongs to the BamE family. In terms of assembly, part of the Bam complex.

The protein localises to the cell outer membrane. In terms of biological role, part of the outer membrane protein assembly complex, which is involved in assembly and insertion of beta-barrel proteins into the outer membrane. This chain is Outer membrane protein assembly factor BamE, found in Methylomonas methanica (strain DSM 25384 / MC09).